A 180-amino-acid chain; its full sequence is NAD(P)H-quinone oxidoreductase subunit I, chloroplastic (180 aa).

2 4Fe-4S ferredoxin-type domains span residues 55-84 (GRIH…VHWR) and 95-124 (LNYS…MTEE). The [4Fe-4S] cluster site is built by Cys64, Cys67, Cys70, Cys74, Cys104, Cys107, Cys110, and Cys114.

It belongs to the complex I 23 kDa subunit family. As to quaternary structure, NDH is composed of at least 16 different subunits, 5 of which are encoded in the nucleus. Requires [4Fe-4S] cluster as cofactor.

It is found in the plastid. The protein localises to the chloroplast thylakoid membrane. It catalyses the reaction a plastoquinone + NADH + (n+1) H(+)(in) = a plastoquinol + NAD(+) + n H(+)(out). The catalysed reaction is a plastoquinone + NADPH + (n+1) H(+)(in) = a plastoquinol + NADP(+) + n H(+)(out). NDH shuttles electrons from NAD(P)H:plastoquinone, via FMN and iron-sulfur (Fe-S) centers, to quinones in the photosynthetic chain and possibly in a chloroplast respiratory chain. The immediate electron acceptor for the enzyme in this species is believed to be plastoquinone. Couples the redox reaction to proton translocation, and thus conserves the redox energy in a proton gradient. The protein is NAD(P)H-quinone oxidoreductase subunit I, chloroplastic of Calycanthus floridus var. glaucus (Eastern sweetshrub).